We begin with the raw amino-acid sequence, 346 residues long: Biotin synthase (346 aa).

Residues 41–265 (NEVQISTLLS…MMPHSYVRLS (225 aa)) enclose the Radical SAM core domain. 3 residues coordinate [4Fe-4S] cluster: Cys56, Cys60, and Cys63. [2Fe-2S] cluster is bound by residues Cys100, Cys131, Cys191, and Arg263.

It belongs to the radical SAM superfamily. Biotin synthase family. As to quaternary structure, homodimer. It depends on [4Fe-4S] cluster as a cofactor. [2Fe-2S] cluster serves as cofactor.

It catalyses the reaction (4R,5S)-dethiobiotin + (sulfur carrier)-SH + 2 reduced [2Fe-2S]-[ferredoxin] + 2 S-adenosyl-L-methionine = (sulfur carrier)-H + biotin + 2 5'-deoxyadenosine + 2 L-methionine + 2 oxidized [2Fe-2S]-[ferredoxin]. It participates in cofactor biosynthesis; biotin biosynthesis; biotin from 7,8-diaminononanoate: step 2/2. Its function is as follows. Catalyzes the conversion of dethiobiotin (DTB) to biotin by the insertion of a sulfur atom into dethiobiotin via a radical-based mechanism. The polypeptide is Biotin synthase (Pseudoalteromonas translucida (strain TAC 125)).